Here is a 373-residue protein sequence, read N- to C-terminus: Plasmepsin VIII (373 aa).

Positions 1–21 (MNKFFVFPLLLILNSIVLVKS) are cleaved as a signal peptide. One can recognise a Peptidase A1 domain in the interval 50–370 (FIGEISIGNP…EKDNMRIGLA (321 aa)). Active-site residues include Asp-68 and Asp-258.

The protein belongs to the peptidase A1 family.

Its function is as follows. During the development in the mosquito vector, plays an essential role in sporozoite egress from the oocyst and sporozoite gliding motility, which is required for the invasion of salivary glands and subsequent transmission to the host. This Plasmodium berghei (strain Anka) protein is Plasmepsin VIII.